We begin with the raw amino-acid sequence, 274 residues long: Bis(5'-nucleosyl)-tetraphosphatase, symmetrical (274 aa).

Belongs to the Ap4A hydrolase family.

The enzyme catalyses P(1),P(4)-bis(5'-adenosyl) tetraphosphate + H2O = 2 ADP + 2 H(+). Functionally, hydrolyzes diadenosine 5',5'''-P1,P4-tetraphosphate to yield ADP. The polypeptide is Bis(5'-nucleosyl)-tetraphosphatase, symmetrical (Shewanella sp. (strain MR-4)).